The chain runs to 65 residues: Vespid chemotactic peptide 5h (65 aa).

Residues 1–23 (MKYNIVFLFAIIASLACLQLTFA) form the signal peptide. AXPX repeat units follow at residues 23–26 (AAPA), 27–30 (ASPL), 31–34 (ANPG), 35–38 (ASPD), 39–42 (AAPN), 43–46 (ADPL), and 47–50 (ADPF). The propeptide occupies 24 to 49 (APAASPLANPGASPDAAPNADPLADP). Residue Leu62 is modified to Leucine amide.

This sequence belongs to the MCD family. Crabrolin subfamily. Expressed by the venom gland.

It localises to the secreted. Functionally, shows antimicrobial activity against the Gram-negative bacteria E.coli ATCC 25922 (MIC=30 ug/ml), the Gram-positive bacteria S.aureus ATCC 2592 (MIC=5 ug/ml) and the fungus C.albicans ATCC 2002 (MIC=25 ug/ml). Acts as a mast cell degranulating peptide. Its mast cell degranulation activity may be related to the activation of G-protein coupled receptors in mast cells as well as interaction with other proteins located in cell endosomal membranes in the mast cells. Induces the chemotaxis of neutrophils. The polypeptide is Vespid chemotactic peptide 5h (Vespa magnifica (Hornet)).